We begin with the raw amino-acid sequence, 569 residues long: Phospholipase B-like protein D (569 aa).

The N-terminal stretch at 1-22 (MIIFKNLLKLLIILLTIKLYFC) is a signal peptide. 5 N-linked (GlcNAc...) asparagine glycosylation sites follow: N93, N126, N181, N425, and N430.

Belongs to the phospholipase B-like family.

It is found in the secreted. Probable phospholipase. The protein is Phospholipase B-like protein D (plbD) of Dictyostelium discoideum (Social amoeba).